The sequence spans 322 residues: Sideroflexin-2 (322 aa).

An N-acetylmethionine modification is found at Met-1. 5 helical membrane-spanning segments follow: residues 100-122, 142-164, 174-192, 228-250, and 265-287; these read MIITGFMLQFYRTMPAVIFWQWV, SVRQMAVSYITATTTAVATAVGM, LVGRWVPFAAVAAANCVNI, VVISRITMAAPGMILLPVLMERL, and PLQVLLSGCFLIFMVPVACGLFP.

It belongs to the sideroflexin family.

The protein localises to the mitochondrion inner membrane. The protein resides in the mitochondrion outer membrane. It catalyses the reaction L-serine(in) = L-serine(out). Mitochondrial amino-acid transporter that mediates transport of serine into mitochondria. Involved in mitochondrial iron homeostasis by regulating heme biosynthesis. This is Sideroflexin-2 from Bos taurus (Bovine).